Reading from the N-terminus, the 519-residue chain is Protein twist (519 aa).

Disordered stretches follow at residues 53–77 (MQQQ…QQQY), 131–156 (NFEQ…VATA), 301–321 (YEAY…SDRD), and 368–389 (FRKP…DEFS). Low complexity-rich tracts occupy residues 54-76 (QQQQ…QQQQ) and 134-146 (QQQQ…QQQQ). Over residues 308 to 317 (NSLNGSTYSS) the composition is skewed to polar residues. Residues 368–379 (FRKPRRRLKRKP) show a composition bias toward basic residues. In terms of domain architecture, bHLH spans 390 to 441 (NQRVMANVRERQRTQSLNDAFKALQQIIPTLPSDKLSKIQTLKLATRYIDFL).

As to quaternary structure, efficient DNA binding requires dimerization with another bHLH protein. Homodimer.

The protein resides in the nucleus. Its function is as follows. Involved in the establishment and dorsoventral patterning of germ layers in the embryo. In Drosophila virilis (Fruit fly), this protein is Protein twist.